We begin with the raw amino-acid sequence, 52 residues long: Venom peptide 4b (52 aa).

Residues 1 to 23 (MRSAILLVIVAIVAILGFLGVNA) form the signal peptide. AXPX repeat units lie at residues 23 to 26 (AEPL), 31 to 34 (AEPN), and 39 to 42 (AAPL). The propeptide occupies 24–41 (EPLPSPLAEPNPHAKAAP). The tract at residues 30–52 (LAEPNPHAKAAPLSPAAMASLAG) is disordered. Residues 37–52 (AKAAPLSPAAMASLAG) are compositionally biased toward low complexity. Alanine 51 bears the Alanine amide mark.

In terms of tissue distribution, expressed by the venom gland.

The protein localises to the secreted. This is Venom peptide 4b from Eumenes pomiformis (Potter wasp).